We begin with the raw amino-acid sequence, 489 residues long: Probable cytochrome P450 CYP44 (489 aa).

The disordered stretch occupies residues 12–31 (VEKCPYSPTSSPNTPPRTFS). Over residues 16-29 (PYSPTSSPNTPPRT) the composition is skewed to low complexity. A heme-binding site is contributed by Cys-438.

Belongs to the cytochrome P450 family. It depends on heme as a cofactor.

In terms of biological role, cytochromes P450 are a group of heme-thiolate monooxygenases. They oxidize a variety of structurally unrelated compounds, including steroids, fatty acids, and xenobiotics. The chain is Probable cytochrome P450 CYP44 (cyp-44A1) from Caenorhabditis elegans.